We begin with the raw amino-acid sequence, 179 residues long: Dual-action ribosomal maturation protein DarP (179 aa).

Belongs to the DarP family.

The protein resides in the cytoplasm. Member of a network of 50S ribosomal subunit biogenesis factors which assembles along the 30S-50S interface, preventing incorrect 23S rRNA structures from forming. Promotes peptidyl transferase center (PTC) maturation. The sequence is that of Dual-action ribosomal maturation protein DarP from Aliivibrio fischeri (strain ATCC 700601 / ES114) (Vibrio fischeri).